A 294-amino-acid chain; its full sequence is 4-hydroxy-tetrahydrodipicolinate synthase (294 aa).

Thr-47 provides a ligand contact to pyruvate. The Proton donor/acceptor role is filled by Tyr-135. The active-site Schiff-base intermediate with substrate is Lys-163. Residue Val-205 coordinates pyruvate.

It belongs to the DapA family. Homotetramer; dimer of dimers.

The protein resides in the cytoplasm. The catalysed reaction is L-aspartate 4-semialdehyde + pyruvate = (2S,4S)-4-hydroxy-2,3,4,5-tetrahydrodipicolinate + H2O + H(+). It participates in amino-acid biosynthesis; L-lysine biosynthesis via DAP pathway; (S)-tetrahydrodipicolinate from L-aspartate: step 3/4. Its function is as follows. Catalyzes the condensation of (S)-aspartate-beta-semialdehyde [(S)-ASA] and pyruvate to 4-hydroxy-tetrahydrodipicolinate (HTPA). This chain is 4-hydroxy-tetrahydrodipicolinate synthase, found in Rickettsia bellii (strain OSU 85-389).